A 135-amino-acid polypeptide reads, in one-letter code: Transcription antitermination protein NusB (135 aa).

This sequence belongs to the NusB family.

In terms of biological role, involved in transcription antitermination. Required for transcription of ribosomal RNA (rRNA) genes. Binds specifically to the boxA antiterminator sequence of the ribosomal RNA (rrn) operons. This chain is Transcription antitermination protein NusB, found in Shewanella halifaxensis (strain HAW-EB4).